A 345-amino-acid chain; its full sequence is Anthranilate phosphoribosyltransferase (345 aa).

Residues Gly88, 91–92, Thr96, 98–101, 116–124, and Ser128 each bind 5-phospho-alpha-D-ribose 1-diphosphate; these read GD, NIST, and KHGNRSASG. Anthranilate is bound at residue Gly88. Position 100 (Ser100) interacts with Mg(2+). Asn119 contacts anthranilate. Arg174 is an anthranilate binding site. Residues Asp233 and Glu234 each contribute to the Mg(2+) site.

This sequence belongs to the anthranilate phosphoribosyltransferase family. Homodimer. Mg(2+) is required as a cofactor.

It carries out the reaction N-(5-phospho-beta-D-ribosyl)anthranilate + diphosphate = 5-phospho-alpha-D-ribose 1-diphosphate + anthranilate. The protein operates within amino-acid biosynthesis; L-tryptophan biosynthesis; L-tryptophan from chorismate: step 2/5. In terms of biological role, catalyzes the transfer of the phosphoribosyl group of 5-phosphorylribose-1-pyrophosphate (PRPP) to anthranilate to yield N-(5'-phosphoribosyl)-anthranilate (PRA). The sequence is that of Anthranilate phosphoribosyltransferase from Prochlorococcus marinus (strain NATL2A).